A 117-amino-acid polypeptide reads, in one-letter code: Hemerythrin subunit beta (117 aa).

Fe cation-binding residues include H24, H53, E57, H72, H76, H105, and D110.

It belongs to the hemerythrin family. In terms of assembly, octamer composed of two types of chains: alpha and beta.

In terms of biological role, hemerythrin is a respiratory protein in blood cells of certain marine worms. The oxygen-binding site in each chain contains two iron atoms. The polypeptide is Hemerythrin subunit beta (Lingula reevii (Inarticulated brachiopod)).